A 140-amino-acid polypeptide reads, in one-letter code: Relaxin-3 (140 aa).

The signal sequence occupies residues Met-1–Ala-23. Cystine bridges form between Cys-33-Cys-127, Cys-45-Cys-140, and Cys-126-Cys-131. A propeptide spans Ala-53 to Arg-116 (connecting peptide).

It belongs to the insulin family. In terms of assembly, heterodimer of a B chain and an A chain linked by two disulfide bonds. In terms of tissue distribution, highly abundant expression is detected in neurons within the ventomedial dorsal tegmental nucleus and the laterally central gray alpha of the pons. Also detected at much lower levels within the hippocampus.

Its subcellular location is the secreted. Functionally, may play a role in neuropeptide signaling processes. Ligand for LGR7, relaxin-3 receptor-1 and relaxin-3 receptor-2. This chain is Relaxin-3 (Rln3), found in Rattus norvegicus (Rat).